Consider the following 399-residue polypeptide: Acetate kinase (399 aa).

A Mg(2+)-binding site is contributed by asparagine 10. ATP is bound at residue lysine 17. Residue arginine 91 coordinates substrate. The active-site Proton donor/acceptor is aspartate 148. Residues 208–212 (HLGNG), 283–285 (DCR), and 331–335 (GIGEN) each bind ATP. Glutamate 385 serves as a coordination point for Mg(2+).

Belongs to the acetokinase family. In terms of assembly, homodimer. Mg(2+) is required as a cofactor. Requires Mn(2+) as cofactor.

It is found in the cytoplasm. The catalysed reaction is acetate + ATP = acetyl phosphate + ADP. Its pathway is metabolic intermediate biosynthesis; acetyl-CoA biosynthesis; acetyl-CoA from acetate: step 1/2. Functionally, catalyzes the formation of acetyl phosphate from acetate and ATP. Can also catalyze the reverse reaction. The polypeptide is Acetate kinase (Shewanella baltica (strain OS223)).